The sequence spans 346 residues: 4-hydroxy-3-methylbut-2-enyl diphosphate reductase (346 aa).

Cys-19 lines the [4Fe-4S] cluster pocket. His-48 and His-84 together coordinate (2E)-4-hydroxy-3-methylbut-2-enyl diphosphate. His-48 and His-84 together coordinate dimethylallyl diphosphate. 2 residues coordinate isopentenyl diphosphate: His-48 and His-84. Cys-106 contacts [4Fe-4S] cluster. His-134 provides a ligand contact to (2E)-4-hydroxy-3-methylbut-2-enyl diphosphate. Dimethylallyl diphosphate is bound at residue His-134. His-134 contacts isopentenyl diphosphate. Catalysis depends on Glu-136, which acts as the Proton donor. Residue Thr-175 coordinates (2E)-4-hydroxy-3-methylbut-2-enyl diphosphate. Position 205 (Cys-205) interacts with [4Fe-4S] cluster. Residues Ser-233, Ser-234, Asn-235, and Ser-278 each contribute to the (2E)-4-hydroxy-3-methylbut-2-enyl diphosphate site. The dimethylallyl diphosphate site is built by Ser-233, Ser-234, Asn-235, and Ser-278. Positions 233, 234, 235, and 278 each coordinate isopentenyl diphosphate.

Belongs to the IspH family. [4Fe-4S] cluster is required as a cofactor.

The catalysed reaction is isopentenyl diphosphate + 2 oxidized [2Fe-2S]-[ferredoxin] + H2O = (2E)-4-hydroxy-3-methylbut-2-enyl diphosphate + 2 reduced [2Fe-2S]-[ferredoxin] + 2 H(+). It carries out the reaction dimethylallyl diphosphate + 2 oxidized [2Fe-2S]-[ferredoxin] + H2O = (2E)-4-hydroxy-3-methylbut-2-enyl diphosphate + 2 reduced [2Fe-2S]-[ferredoxin] + 2 H(+). The protein operates within isoprenoid biosynthesis; dimethylallyl diphosphate biosynthesis; dimethylallyl diphosphate from (2E)-4-hydroxy-3-methylbutenyl diphosphate: step 1/1. Its pathway is isoprenoid biosynthesis; isopentenyl diphosphate biosynthesis via DXP pathway; isopentenyl diphosphate from 1-deoxy-D-xylulose 5-phosphate: step 6/6. Catalyzes the conversion of 1-hydroxy-2-methyl-2-(E)-butenyl 4-diphosphate (HMBPP) into a mixture of isopentenyl diphosphate (IPP) and dimethylallyl diphosphate (DMAPP). Acts in the terminal step of the DOXP/MEP pathway for isoprenoid precursor biosynthesis. This Brucella suis biovar 1 (strain 1330) protein is 4-hydroxy-3-methylbut-2-enyl diphosphate reductase.